Reading from the N-terminus, the 343-residue chain is Fructose-1,6-bisphosphatase class 1 (343 aa).

Residues Glu-90, Asp-109, Leu-111, and Asp-112 each contribute to the Mg(2+) site. Residues 112-115 (DGSS) and Asn-199 each bind substrate. Glu-271 serves as a coordination point for Mg(2+).

This sequence belongs to the FBPase class 1 family. As to quaternary structure, homotetramer. It depends on Mg(2+) as a cofactor.

The protein localises to the cytoplasm. It catalyses the reaction beta-D-fructose 1,6-bisphosphate + H2O = beta-D-fructose 6-phosphate + phosphate. It functions in the pathway carbohydrate biosynthesis; Calvin cycle. The protein is Fructose-1,6-bisphosphatase class 1 of Rhodopseudomonas palustris (strain HaA2).